A 114-amino-acid chain; its full sequence is Iron-sulfur cluster insertion protein ErpA (114 aa).

C42, C106, and C108 together coordinate iron-sulfur cluster.

This sequence belongs to the HesB/IscA family. Homodimer. The cofactor is iron-sulfur cluster.

Functionally, required for insertion of 4Fe-4S clusters for at least IspG. This is Iron-sulfur cluster insertion protein ErpA from Haemophilus influenzae (strain PittEE).